A 129-amino-acid chain; its full sequence is Small ribosomal subunit protein uS11 (129 aa).

Belongs to the universal ribosomal protein uS11 family. In terms of assembly, part of the 30S ribosomal subunit. Interacts with proteins S7 and S18. Binds to IF-3.

Functionally, located on the platform of the 30S subunit, it bridges several disparate RNA helices of the 16S rRNA. Forms part of the Shine-Dalgarno cleft in the 70S ribosome. This is Small ribosomal subunit protein uS11 from Geobacillus stearothermophilus (Bacillus stearothermophilus).